We begin with the raw amino-acid sequence, 1090 residues long: Solute carrier family 38 member 10 (1090 aa).

Transmembrane regions (helical) follow at residues 9–31 (WGLI…PFCF), 36–58 (IVLG…MFLV), 84–104 (LVET…YVVI), 123–143 (TVRV…LSLQ), 153–173 (FSAM…LSSL), 229–249 (IFAS…FFGY), 272–292 (MIRV…ILPC), 323–343 (VLTL…PNVE), 345–365 (ILGF…PALI), and 378–398 (VVLW…LSVT). Ser-441 is modified (phosphoserine). 6 stretches are compositionally biased toward basic and acidic residues: residues 441–454 (SQEK…KEVL), 493–508 (EAHR…KVVV), 517–528 (PEEKKPPPRLPD), 544–560 (ESEK…EGKR), 587–596 (PRKEDSRPGN), and 607–623 (DSVE…REPA). Disordered regions lie at residues 441-675 (SQEK…AGSK), 729-831 (EIRQ…IDLR), and 857-1037 (KAAP…ELAP). Residues Ser-608 and Ser-636 each carry the phosphoserine modification. 3 stretches are compositionally biased toward basic and acidic residues: residues 654–665 (EAAEQREKKEAE), 729–744 (EIRQ…KPKP), and 758–767 (GQEEEAEHAG). Thr-769 carries the phosphothreonine modification. Ser-887 is modified (phosphoserine). Positions 923–936 (RQSGPTKAPVQTQA) are enriched in polar residues. Composition is skewed to basic and acidic residues over residues 954–973 (PEVR…EQHK), 1004–1013 (ENAKPNRDLK), and 1026–1037 (DLASHPEQELAP).

This sequence belongs to the amino acid/polyamine transporter 2 family. Expressed in neurons, astrocytes and epithelial cells scattered throughout the central nervous system structures including striatum, ependyma, cerebral cortex, hippocampus, hypothalamus, thalamus, pons, and cerebellum (at protein level). Highly expressed in paraventricular hypothalamic nucleus, suprachiasmatic nucleus, anterior hypothalamic area central part, in lateral ventricule and in dorsal 3rd ventricule (at protein level). Expressed in choroid plexus epithelial cells (at protein level).

It is found in the membrane. The enzyme catalyses L-glutamate(out) = L-glutamate(in). It carries out the reaction L-glutamine(out) = L-glutamine(in). The catalysed reaction is L-alanine(in) = L-alanine(out). It catalyses the reaction L-serine(in) = L-serine(out). The enzyme catalyses L-leucine(in) = L-leucine(out). Facilitates bidirectional transport of amino acids. May act as a glutamate sensor that regulates glutamate-glutamine cycle and mTOR signaling in the brain. The transport mechanism remains to be elucidated. The sequence is that of Solute carrier family 38 member 10 from Mus musculus (Mouse).